The following is a 145-amino-acid chain: Ribonuclease P protein component (145 aa).

A disordered region spans residues 119-145; sequence PLPAAPGTMPPARTVRPSSPSPTEPEL.

It belongs to the RnpA family. As to quaternary structure, consists of a catalytic RNA component (M1 or rnpB) and a protein subunit.

It carries out the reaction Endonucleolytic cleavage of RNA, removing 5'-extranucleotides from tRNA precursor.. Its function is as follows. RNaseP catalyzes the removal of the 5'-leader sequence from pre-tRNA to produce the mature 5'-terminus. It can also cleave other RNA substrates such as 4.5S RNA. The protein component plays an auxiliary but essential role in vivo by binding to the 5'-leader sequence and broadening the substrate specificity of the ribozyme. The polypeptide is Ribonuclease P protein component (Xanthomonas euvesicatoria pv. vesicatoria (strain 85-10) (Xanthomonas campestris pv. vesicatoria)).